A 475-amino-acid polypeptide reads, in one-letter code: Glycogen synthase (475 aa).

K15 is a binding site for ADP-alpha-D-glucose.

This sequence belongs to the glycosyltransferase 1 family. Bacterial/plant glycogen synthase subfamily.

It catalyses the reaction [(1-&gt;4)-alpha-D-glucosyl](n) + ADP-alpha-D-glucose = [(1-&gt;4)-alpha-D-glucosyl](n+1) + ADP + H(+). It participates in glycan biosynthesis; glycogen biosynthesis. Its function is as follows. Synthesizes alpha-1,4-glucan chains using ADP-glucose. The sequence is that of Glycogen synthase from Anaeromyxobacter dehalogenans (strain 2CP-C).